A 133-amino-acid chain; its full sequence is MSMKEFVQKLDEIQASFSSHFPLVIINSNYKIDNGIVIFGKKGWLRINESVPIMINYGSLILLDTPKNYMVGVYKNVNGGRKIKSYSPSRSQKALNNPSKIRTKQTNNDTTIQQSNNTTSTNTKPSSNTNTQQ.

Positions 82–133 (KIKSYSPSRSQKALNNPSKIRTKQTNNDTTIQQSNNTTSTNTKPSSNTNTQQ) are disordered. The span at 86–100 (YSPSRSQKALNNPSK) shows a compositional bias: polar residues. Residues 105-133 (QTNNDTTIQQSNNTTSTNTKPSSNTNTQQ) show a composition bias toward low complexity.

This is an uncharacterized protein from Acidianus convivator (ABV).